The following is a 94-amino-acid chain: Large ribosomal subunit protein bL31 (94 aa).

Residues Lys-64 to Ser-94 form a disordered region. Basic and acidic residues predominate over residues Asp-73–Ser-94.

This sequence belongs to the bacterial ribosomal protein bL31 family. Type A subfamily. In terms of assembly, part of the 50S ribosomal subunit.

Functionally, binds the 23S rRNA. The protein is Large ribosomal subunit protein bL31 of Prochlorococcus marinus (strain SARG / CCMP1375 / SS120).